Reading from the N-terminus, the 463-residue chain is D-inositol 3-phosphate glycosyltransferase (463 aa).

Residue His-40 coordinates 1D-myo-inositol 3-phosphate. Residues 46–47 (QP) and Gly-54 contribute to the UDP-N-acetyl-alpha-D-glucosamine site. 1D-myo-inositol 3-phosphate contacts are provided by residues 51–56 (DAGGMN), Lys-109, Tyr-142, Thr-166, and Arg-186. UDP-N-acetyl-alpha-D-glucosamine contacts are provided by Arg-260, Lys-265, and Gln-318. Mg(2+)-binding residues include Phe-327, His-328, and Val-330. Residues Glu-340 and Glu-348 each coordinate UDP-N-acetyl-alpha-D-glucosamine. Thr-354 lines the Mg(2+) pocket. The interval 443 to 463 (VRDPVAARKPRRWTARRGVGA) is disordered.

This sequence belongs to the glycosyltransferase group 1 family. MshA subfamily. As to quaternary structure, homodimer.

It catalyses the reaction 1D-myo-inositol 3-phosphate + UDP-N-acetyl-alpha-D-glucosamine = 1D-myo-inositol 2-acetamido-2-deoxy-alpha-D-glucopyranoside 3-phosphate + UDP + H(+). Functionally, catalyzes the transfer of a N-acetyl-glucosamine moiety to 1D-myo-inositol 3-phosphate to produce 1D-myo-inositol 2-acetamido-2-deoxy-glucopyranoside 3-phosphate in the mycothiol biosynthesis pathway. The protein is D-inositol 3-phosphate glycosyltransferase of Mycobacterium ulcerans (strain Agy99).